Reading from the N-terminus, the 292-residue chain is ATP synthase gamma chain (292 aa).

It belongs to the ATPase gamma chain family. As to quaternary structure, F-type ATPases have 2 components, CF(1) - the catalytic core - and CF(0) - the membrane proton channel. CF(1) has five subunits: alpha(3), beta(3), gamma(1), delta(1), epsilon(1). CF(0) has three main subunits: a, b and c.

It localises to the cell inner membrane. Functionally, produces ATP from ADP in the presence of a proton gradient across the membrane. The gamma chain is believed to be important in regulating ATPase activity and the flow of protons through the CF(0) complex. This is ATP synthase gamma chain from Nitrobacter hamburgensis (strain DSM 10229 / NCIMB 13809 / X14).